The primary structure comprises 609 residues: Heat shock factor protein (609 aa).

Positions 1–33 (MIQTASTISSNGGTNQGMESSSANSPEMNGTQN) are enriched in polar residues. Residues 1–47 (MIQTASTISSNGGTNQGMESSSANSPEMNGTQNSMSVGMSGSGSSQN) form a disordered region. Over residues 34 to 45 (SMSVGMSGSGSS) the composition is skewed to low complexity. Residues 50–156 (ITQFSNKLYN…LLCLVTRKKA (107 aa)) mediate DNA binding. 4 disordered regions span residues 255-298 (PTVS…GKYR), 310-371 (SSFN…TDPK), 411-445 (NNTSSEQHHNSYRGSVSNSQPSGNLSESTNLQPVQ), and 567-609 (SNGN…SIGA). 4 stretches are compositionally biased toward polar residues: residues 257–277 (VSPTNEPSAHSRPSPQGTTAN), 339–360 (DSFNNSIDSYISPNQSPNTDVP), 422–443 (YRGSVSNSQPSGNLSESTNLQP), and 567–597 (SNGNTFGSNPVSLPNQQKSVNPSLMTVSSPR). Ser350 carries the post-translational modification Phosphoserine. The segment covering 598-609 (QVRKKRKSSIGA) has biased composition (basic residues).

Belongs to the HSF family. As to quaternary structure, homotrimer.

It is found in the nucleus. Its function is as follows. DNA-binding protein that specifically binds heat shock promoter elements (HSE) and activates transcription. Also required for growth at normal temperatures. The polypeptide is Heat shock factor protein (hsf1) (Schizosaccharomyces pombe (strain 972 / ATCC 24843) (Fission yeast)).